The following is a 281-amino-acid chain: MLFIFPLSLPWRPSCWKESCSTGQRQAGRSREDSVTPPPSSPWPTPPAGAMSTKQEARRDEGEARTRGQEAQLRDRAHLSQQRRLKQATQFLHKDSADLLPLDSLKRLGTSKDLQPRSVIQRRLVEGNPNWLQGEPPRMQDLIHGQESRRKTSRTEIPALLVNCKCQDQLLRVAVDTGTQYNRISAGCLSRLGLEKRVLKASAGDLAPGPPTQVEQLELQLGQETVVCSAQVVDAESPEFCLGLQTLLSLKCCIDLEHGVLRLKAPFSELPFLPLYQEPGQ.

The disordered stretch occupies residues 18 to 85 (ESCSTGQRQA…RAHLSQQRRL (68 aa)). Residues 36-47 (TPPPSSPWPTPP) are compositionally biased toward pro residues. The span at 55–78 (QEARRDEGEARTRGQEAQLRDRAH) shows a compositional bias: basic and acidic residues. The short motif at 244 to 248 (LQTLL) is the LXXLL motif element.

In terms of assembly, interacts with NR1F2, RARA and THRB in a ligand-dependent manner.

The protein resides in the nucleus. Down-regulates transcriptional activation by nuclear receptors such as NR1F2. In Homo sapiens (Human), this protein is Nuclear receptor-interacting protein 2 (NRIP2).